Consider the following 182-residue polypeptide: CD-NTase-associated protein 15 (182 aa).

Helical transmembrane passes span 11–31 (ITGW…CTVW) and 33–53 (IGWI…TIGY).

It belongs to the CBASS Cap15 membrane effector family. The beta barrel domain oligomerizes; in the presence of cyclic nucleotides (probably 3',2'-cGAMP) higher-level oligomers occur.

The protein resides in the cell membrane. Its function is as follows. Effector protein of a CBASS antivirus system. CBASS (cyclic oligonucleotide-based antiphage signaling system) provides immunity against bacteriophage. The CD-NTase protein (CdnE) synthesizes cyclic nucleotides in response to infection; these serve as specific second messenger signals. The signals activate a diverse range of effectors, leading to bacterial cell death and thus abortive phage infection. This system triggers membrane disruption without lysis. A type I-B CBASS system. Binds cyclic nucleotide second messenger 3',2'-cGAMP, probably oligomerizing, and induces cell membrane shrinkage and rupture, leading to cell death. In terms of biological role, protects S.aureus against phage infection. When the CBASS operon (cdnE-cap15) is introduced in S.aureus strain RN4220 there is strong protection against lytic DNA phages 80alpha-vir and phi-NM1-gamma-6 but little to no protection against phages phi-NM4-gamma-4 or phi-12-gamma-3. This Staphylococcus schleiferi protein is CD-NTase-associated protein 15.